The following is a 678-amino-acid chain: Platelet endothelial cell adhesion molecule (678 aa).

A signal peptide spans 1–17; the sequence is MLLALLLTMLLYASLQA. Residues 18 to 589 lie on the Extracellular side of the membrane; sequence QENSFTINSI…VRVFLAPWKK (572 aa). Ig-like C2-type domains lie at 40 to 126, 135 to 213, 225 to 309, 315 to 391, 413 to 472, and 488 to 577; these read GQKL…PEVT, GGIV…FIRS, PKFQ…ILVN, PRPK…LVPV, GQII…NCHS, and PVDE…RSGP. The cysteines at positions 47 and 99 are disulfide-linked. N-linked (GlcNAc...) asparagine glycosylation is found at N74 and N141. 2 disulfide bridges follow: C142–C195 and C245–C293. N309, N345, N360, N424, and N540 each carry an N-linked (GlcNAc...) asparagine glycan. Intrachain disulfides connect C336–C375, C420–C465, and C512–C561. A helical transmembrane segment spans residues 590–610; that stretch reads GLIAVVVIGVVIAALIVAAKY. The Cytoplasmic portion of the chain corresponds to 611–678; it reads YFLRKAKAKQ…EPHQENGRLP (68 aa). The segment at 634-653 is disordered; the sequence is NSNSEKVSEPSVETNSHYDS. An ITIM motif motif is present at residues 658-663; it reads VEYTEV. Y660 carries the post-translational modification Phosphotyrosine; by FER.

In terms of assembly, trans-homodimer (via Ig-like C2-type 1 and Ig-like C2-type 2 domains); trans-homodimerization is required for cell-cell interaction. Forms a complex with BDKRB2 and GNAQ. Interacts with BDKRB2 and GNAQ. Interacts with PTPN11. Interacts with FER. Interacts with CD177; the interaction is Ca(2+)-dependent; the interaction is direct. In terms of processing, phosphorylated on Ser and Tyr residues after cellular activation. In endothelial cells Fyn mediates mechanical-force (stretch or pull) induced tyrosine phosphorylation. Phosphorylated on tyrosine residues by FER and FES in response to FCER1 activation. Post-translationally, palmitoylation by ZDHHC21 is necessary for cell surface expression in endothelial cells and enrichment in membrane rafts.

It localises to the cell membrane. It is found in the membrane raft. The protein localises to the cell junction. Cell adhesion molecule which is required for leukocyte transendothelial migration (TEM) under most inflammatory conditions. Tyr-660 plays a critical role in TEM and is required for efficient trafficking of PECAM1 to and from the lateral border recycling compartment (LBRC) and is also essential for the LBRC membrane to be targeted around migrating leukocytes. Trans-homophilic interaction may play a role in endothelial cell-cell adhesion via cell junctions. Heterophilic interaction with CD177 plays a role in transendothelial migration of neutrophils. Homophilic ligation of PECAM1 prevents macrophage-mediated phagocytosis of neighboring viable leukocytes by transmitting a detachment signal. Promotes macrophage-mediated phagocytosis of apoptotic leukocytes by tethering them to the phagocytic cells; PECAM1-mediated detachment signal appears to be disabled in apoptotic leukocytes. Modulates bradykinin receptor BDKRB2 activation. Regulates bradykinin- and hyperosmotic shock-induced ERK1/2 activation in endothelial cells. Induces susceptibility to atherosclerosis. The protein is Platelet endothelial cell adhesion molecule (Pecam1) of Rattus norvegicus (Rat).